A 169-amino-acid polypeptide reads, in one-letter code: Putative phosphoesterase BLi01284/BL02661 (169 aa).

Histidine 34 acts as the Proton donor in catalysis. Short sequence motifs (HXTX) lie at residues 34 to 37 (HLTL) and 115 to 118 (HVTV). Histidine 115 functions as the Proton acceptor in the catalytic mechanism.

Belongs to the 2H phosphoesterase superfamily. YjcG family.

The polypeptide is Putative phosphoesterase BLi01284/BL02661 (Bacillus licheniformis (strain ATCC 14580 / DSM 13 / JCM 2505 / CCUG 7422 / NBRC 12200 / NCIMB 9375 / NCTC 10341 / NRRL NRS-1264 / Gibson 46)).